A 103-amino-acid chain; its full sequence is SGSSPSSNSNYCNLMMFCRKMTQGKCKLVNTFVHESLADVKAVCSQKKVACKNGQTNCYQSNSAMRITDCRQTGSSKYPNCTCKTTRAEKHIIVACEGKXFMP.

4 disulfide bridges follow: Cys12–Cys70, Cys26–Cys81, Cys44–Cys96, and Cys51–Cys58. Substrate-binding positions include Lys27–Thr31, Lys52, and Arg71.

Belongs to the pancreatic ribonuclease family. In terms of assembly, homodimer; disulfide-linked.

It is found in the secreted. The catalysed reaction is an [RNA] containing cytidine + H2O = an [RNA]-3'-cytidine-3'-phosphate + a 5'-hydroxy-ribonucleotide-3'-[RNA].. It carries out the reaction an [RNA] containing uridine + H2O = an [RNA]-3'-uridine-3'-phosphate + a 5'-hydroxy-ribonucleotide-3'-[RNA].. In terms of biological role, this enzyme hydrolyzes both single- and double-stranded RNA. In Cephalophus silvicultor (Yellow-backed duiker), this protein is Seminal ribonuclease (SRN).